We begin with the raw amino-acid sequence, 512 residues long: Maturase K (512 aa).

Belongs to the intron maturase 2 family. MatK subfamily.

Its subcellular location is the plastid. It localises to the chloroplast. Its function is as follows. Usually encoded in the trnK tRNA gene intron. Probably assists in splicing its own and other chloroplast group II introns. This Filarum manserichense protein is Maturase K.